The primary structure comprises 83 residues: RNA-binding protein Hfq (83 aa).

Residues 9–68 (DPYLNALRKERIPVSIFLVNGIKLQGQIESFDQFVILLKNTVSQMVYKHAISTVVPARNV) enclose the Sm domain.

The protein belongs to the Hfq family. In terms of assembly, homohexamer.

Its function is as follows. RNA chaperone that binds small regulatory RNA (sRNAs) and mRNAs to facilitate mRNA translational regulation in response to envelope stress, environmental stress and changes in metabolite concentrations. Also binds with high specificity to tRNAs. The polypeptide is RNA-binding protein Hfq (Hahella chejuensis (strain KCTC 2396)).